Here is a 428-residue protein sequence, read N- to C-terminus: Keratin, type I cytoskeletal 18-A (428 aa).

A head region spans residues 2-78 (SSSRSVYSSS…NVNLFGGVQN (77 aa)). Residues 24-45 (SAPRFTPGSSAASVHAGAGGSG) are disordered. Residues 79 to 114 (EKETMQDLNDRLASYLERVRSLESANKKLEVQIRQH) are coil 1A. Residues 79–389 (EKETMQDLND…RLLEGDSFDL (311 aa)) enclose the IF rod domain. The interval 115–130 (TEKKGPAKDWSPYYMT) is linker 1. Positions 131–222 (IEDLKKQVFN…KNHQDDVNEL (92 aa)) are coil 1B. The segment at 223–246 (QAQIASSAVTVEVDAPKSQDLGKI) is linker 12. The coil 2 stretch occupies residues 247–384 (MADLRAQYDE…IQTYRRLLEG (138 aa)). The segment at 385 to 428 (DSFDLQDAVPVVTTQTVKKVITTTQRLVDGKVVAESNNTEVIKS) is tail.

The protein belongs to the intermediate filament family. In terms of assembly, heterotetramer of two type I and two type II keratins. Keratin-18 associates with keratin-8. In terms of processing, proteolytically cleaved by caspases during epithelial cell apoptosis. In terms of tissue distribution, expressed at high levels in notochord and low levels in adult liver.

Functionally, when phosphorylated, plays a role in filament reorganization. The sequence is that of Keratin, type I cytoskeletal 18-A (krt18-a) from Xenopus laevis (African clawed frog).